The sequence spans 126 residues: Small ribosomal subunit protein uS13 (126 aa).

The tract at residues 92 to 126 (RMGLPVRGQRTRTNARTRRGGRRTVAGKKKAPAKK) is disordered. The segment covering 100-126 (QRTRTNARTRRGGRRTVAGKKKAPAKK) has biased composition (basic residues).

It belongs to the universal ribosomal protein uS13 family. In terms of assembly, part of the 30S ribosomal subunit. Forms a loose heterodimer with protein S19. Forms two bridges to the 50S subunit in the 70S ribosome.

Located at the top of the head of the 30S subunit, it contacts several helices of the 16S rRNA. In the 70S ribosome it contacts the 23S rRNA (bridge B1a) and protein L5 of the 50S subunit (bridge B1b), connecting the 2 subunits; these bridges are implicated in subunit movement. Contacts the tRNAs in the A and P-sites. In Cyanothece sp. (strain PCC 7425 / ATCC 29141), this protein is Small ribosomal subunit protein uS13.